The chain runs to 303 residues: Recombination-associated protein RdgC (303 aa).

This sequence belongs to the RdgC family.

Its subcellular location is the cytoplasm. The protein resides in the nucleoid. In terms of biological role, may be involved in recombination. The chain is Recombination-associated protein RdgC from Shewanella loihica (strain ATCC BAA-1088 / PV-4).